Here is a 122-residue protein sequence, read N- to C-terminus: Large ribosomal subunit protein uL14 (122 aa).

The protein belongs to the universal ribosomal protein uL14 family. In terms of assembly, part of the 50S ribosomal subunit. Forms a cluster with proteins L3 and L19. In the 70S ribosome, L14 and L19 interact and together make contacts with the 16S rRNA in bridges B5 and B8.

Binds to 23S rRNA. Forms part of two intersubunit bridges in the 70S ribosome. The sequence is that of Large ribosomal subunit protein uL14 from Amoebophilus asiaticus (strain 5a2).